Reading from the N-terminus, the 37-residue chain is Large ribosomal subunit protein bL36 (37 aa).

It belongs to the bacterial ribosomal protein bL36 family.

The chain is Large ribosomal subunit protein bL36 from Geobacillus kaustophilus (strain HTA426).